Reading from the N-terminus, the 740-residue chain is E3 ubiquitin-protein ligase DTX3L (740 aa).

Ala-2 bears the N-acetylalanine mark. Ser-9 is modified (phosphoserine). Disordered stretches follow at residues 96-119 (NTRP…MHQH), 195-231 (SEQK…KAEQ), and 524-551 (HETP…SEAS). Composition is skewed to polar residues over residues 98–111 (RPQI…QAET) and 195–205 (SEQKQQFSPSM). Ser-202 carries the phosphoserine modification. The span at 206–218 (TERKPLSQQERDS) shows a compositional bias: basic and acidic residues. 3 positions are modified to phosphoserine: Ser-221, Ser-532, and Ser-539. An RING-type zinc finger spans residues 561 to 600 (CVICMDTISNKKVLPKCKHEFCAPCINKAMSYKPICPTCQ).

It belongs to the Deltex family. Homodimer and heterodimer. Can heterodimerize with DTX1, enhancing its ubiquitin ligase activity in vitro. Interacts (via N-terminus) with ADP ribosyltransferase PARP9/BAL1 (via PARP catalytic domain) forming a stable complex; the interaction is required to activate PARP9 but is dispensable for DTX3L catalytic activity. Forms a complex with STAT1 and PARP9 independently of IFNB1 or IFNG-mediated STAT1 'Tyr-701' phosphorylation. Found in a complex with PARP9, STAT1 and H2BC9. Found in a complex with E3 ligase ITCH and ESCRT-0 components HGS and STAM. Interacts (via C-terminus) with ITCH; the interaction is increased upon CXCL12 stimulation and inhibits ITCH catalytic activity; the interaction is direct. Interacts with HGS and STAM; the interaction brings together HGS and STAM and promotes their recruitment to early endosomes. As to quaternary structure, (Microbial infection) Interacts with encephalomyocarditis virus (EMCV) C3 protease; the interaction results in C3 protease 'Lys-48'-linked ubiquitination. In terms of assembly, (Microbial infection) Interacts with human rhinovirus (HRV) C3 protease; the interaction results in C3 protease 'Lys-48'-linked ubiquitination. Post-translationally, autoubiquitinated.

It is found in the cytoplasm. The protein localises to the nucleus. The protein resides in the early endosome membrane. Its subcellular location is the lysosome membrane. It catalyses the reaction S-ubiquitinyl-[E2 ubiquitin-conjugating enzyme]-L-cysteine + [acceptor protein]-L-lysine = [E2 ubiquitin-conjugating enzyme]-L-cysteine + N(6)-ubiquitinyl-[acceptor protein]-L-lysine.. Its pathway is protein modification; protein ubiquitination. With respect to regulation, binding to PARP9 enhances DTX3L catalytic activity. In terms of biological role, E3 ubiquitin-protein ligase which, in association with ADP-ribosyltransferase PARP9, plays a role in DNA damage repair and in interferon-mediated antiviral responses. Monoubiquitinates several histones, including histone H2A, H2B, H3 and H4. In response to DNA damage, mediates monoubiquitination of 'Lys-91' of histone H4 (H4K91ub1). The exact role of H4K91ub1 in DNA damage response is still unclear but it may function as a licensing signal for additional histone H4 post-translational modifications such as H4 'Lys-20' methylation (H4K20me). PARP1-dependent PARP9-DTX3L-mediated ubiquitination promotes the rapid and specific recruitment of 53BP1/TP53BP1, UIMC1/RAP80, and BRCA1 to DNA damage sites. By monoubiquitinating histone H2B H2BC9/H2BJ and thereby promoting chromatin remodeling, positively regulates STAT1-dependent interferon-stimulated gene transcription and thus STAT1-mediated control of viral replication. Independently of its catalytic activity, promotes the sorting of chemokine receptor CXCR4 from early endosome to lysosome following CXCL12 stimulation by reducing E3 ligase ITCH activity and thus ITCH-mediated ubiquitination of endosomal sorting complex required for transport ESCRT-0 components HGS and STAM. In addition, required for the recruitment of HGS and STAM to early endosomes. In association with PARP9, plays a role in antiviral responses by mediating 'Lys-48'-linked ubiquitination of encephalomyocarditis virus (EMCV) and human rhinovirus (HRV) C3 proteases and thus promoting their proteasomal-mediated degradation. The protein is E3 ubiquitin-protein ligase DTX3L (DTX3L) of Homo sapiens (Human).